We begin with the raw amino-acid sequence, 425 residues long: Putative dipeptidase MGYG_00085 (425 aa).

The first 31 residues, 1-31, serve as a signal peptide directing secretion; the sequence is MAPERRSRLSETAGLFVSLLALTSIVPVQAV. Zn(2+)-binding residues include histidine 56, aspartate 58, and glutamate 168. The cysteines at positions 107 and 197 are disulfide-linked. Histidine 195 provides a ligand contact to substrate. Zn(2+)-binding residues include histidine 239 and histidine 260. Arginine 271 and aspartate 331 together coordinate substrate. The N-linked (GlcNAc...) asparagine glycan is linked to asparagine 403.

Belongs to the metallo-dependent hydrolases superfamily. Peptidase M19 family. Zn(2+) serves as cofactor.

The enzyme catalyses an L-aminoacyl-L-amino acid + H2O = 2 an L-alpha-amino acid. Its function is as follows. Hydrolyzes a wide range of dipeptides. In Arthroderma gypseum (strain ATCC MYA-4604 / CBS 118893) (Microsporum gypseum), this protein is Putative dipeptidase MGYG_00085.